The primary structure comprises 254 residues: 5-oxoprolinase subunit A (254 aa).

It belongs to the LamB/PxpA family. In terms of assembly, forms a complex composed of PxpA, PxpB and PxpC.

The enzyme catalyses 5-oxo-L-proline + ATP + 2 H2O = L-glutamate + ADP + phosphate + H(+). Its function is as follows. Catalyzes the cleavage of 5-oxoproline to form L-glutamate coupled to the hydrolysis of ATP to ADP and inorganic phosphate. The chain is 5-oxoprolinase subunit A from Acinetobacter baumannii (strain ATCC 17978 / DSM 105126 / CIP 53.77 / LMG 1025 / NCDC KC755 / 5377).